Here is a 476-residue protein sequence, read N- to C-terminus: TOM1-like protein 1 (476 aa).

The region spanning 22 to 154 (ATFAGVQTED…DLVKKGVQFP (133 aa)) is the VHS domain. Residues 155 to 179 (PSEAEAETARQETAQISSNPPTSVP) are disordered. Positions 170–179 (ISSNPPTSVP) are enriched in polar residues. S171 is subject to Phosphoserine. The GAT domain occupies 200 to 288 (EQIGKLHSEL…AILGYERFTR (89 aa)). The segment covering 298–314 (KNQKEATNTTSEPSAPS) has biased composition (polar residues). Positions 298-327 (KNQKEATNTTSEPSAPSQDLLDLSPSPRMP) are disordered. Phosphoserine occurs at positions 314, 321, and 323. Positions 392–395 (YDNF) are interaction with GRB2. The SH3-binding motif lies at 421 to 425 (LPPLP). The interval 442–445 (YEVM) is interaction with PIK3R1. Y460 bears the Phosphotyrosine mark. An SH2-binding motif is present at residues 460–463 (YEEI).

Belongs to the TOM1 family. As to quaternary structure, interacts with FYN, GRB2 and PIK3R1 when phosphorylated. Interacts with LYN. Phosphorylated on tyrosines by FYN and LYN.

It is found in the golgi apparatus. The protein localises to the golgi stack. The protein resides in the endosome membrane. It localises to the cytoplasm. Its subcellular location is the membrane. Functionally, probable adapter protein involved in signaling pathways. Interacts with the SH2 and SH3 domains of various signaling proteins when it is phosphorylated. May promote FYN activation, possibly by disrupting intramolecular SH3-dependent interactions. In Homo sapiens (Human), this protein is TOM1-like protein 1 (TOM1L1).